Consider the following 132-residue polypeptide: Protein p15 (132 aa).

May play a role in infectivity. This Panicum mosaic virus (strain United States/Kansas 109S) (PMV) protein is Protein p15.